Here is a 349-residue protein sequence, read N- to C-terminus: Protein-glutamate methylesterase/protein-glutamine glutaminase 1 (349 aa).

A Response regulatory domain is found at 4–119 (RILVVDDSAV…KGFLEDSARR (116 aa)). Position 53 is a 4-aspartylphosphate (Asp53). The CheB-type methylesterase domain maps to 159–349 (PRAGRAELVV…VASAVLAWAR (191 aa)). Active-site residues include Ser172, His198, and Asp293.

It belongs to the CheB family. Phosphorylated by CheA. Phosphorylation of the N-terminal regulatory domain activates the methylesterase activity.

The protein localises to the cytoplasm. It carries out the reaction [protein]-L-glutamate 5-O-methyl ester + H2O = L-glutamyl-[protein] + methanol + H(+). The catalysed reaction is L-glutaminyl-[protein] + H2O = L-glutamyl-[protein] + NH4(+). In terms of biological role, involved in chemotaxis. Part of a chemotaxis signal transduction system that modulates chemotaxis in response to various stimuli. Catalyzes the demethylation of specific methylglutamate residues introduced into the chemoreceptors (methyl-accepting chemotaxis proteins or MCP) by CheR. Also mediates the irreversible deamidation of specific glutamine residues to glutamic acid. This is Protein-glutamate methylesterase/protein-glutamine glutaminase 1 from Anaeromyxobacter dehalogenans (strain 2CP-C).